A 307-amino-acid polypeptide reads, in one-letter code: Acetyl-coenzyme A carboxylase carboxyl transferase subunit beta (307 aa).

The region spanning 25-294 (VWTKCTSCEQ…PLVVPIEQPK (270 aa)) is the CoA carboxyltransferase N-terminal domain. Zn(2+) contacts are provided by cysteine 29, cysteine 32, cysteine 48, and cysteine 51. The C4-type zinc finger occupies 29–51 (CTSCEQVLYHADLERNLEVCPKC).

This sequence belongs to the AccD/PCCB family. In terms of assembly, acetyl-CoA carboxylase is a heterohexamer composed of biotin carboxyl carrier protein (AccB), biotin carboxylase (AccC) and two subunits each of ACCase subunit alpha (AccA) and ACCase subunit beta (AccD). Requires Zn(2+) as cofactor.

The protein resides in the cytoplasm. The catalysed reaction is N(6)-carboxybiotinyl-L-lysyl-[protein] + acetyl-CoA = N(6)-biotinyl-L-lysyl-[protein] + malonyl-CoA. The protein operates within lipid metabolism; malonyl-CoA biosynthesis; malonyl-CoA from acetyl-CoA: step 1/1. In terms of biological role, component of the acetyl coenzyme A carboxylase (ACC) complex. Biotin carboxylase (BC) catalyzes the carboxylation of biotin on its carrier protein (BCCP) and then the CO(2) group is transferred by the transcarboxylase to acetyl-CoA to form malonyl-CoA. The chain is Acetyl-coenzyme A carboxylase carboxyl transferase subunit beta from Photobacterium profundum (strain SS9).